The following is a 171-amino-acid chain: CASP-like protein 5A2 (171 aa).

Residues 1 to 39 (MDGSAHLRDPPGPAVLRWRLEDMHIIPGTSGSLALRICQ) lie on the Cytoplasmic side of the membrane. A helical membrane pass occupies residues 40-60 (FSAAIVSFSVMISAANFSSVT). A61 is a topological domain (extracellular). Residues 62–82 (FCFLVAAMVLQCMWSLSVATI) form a helical membrane-spanning segment. At 83-106 (EGYAMLVGRSLRDSPLLSLFAVGD) the chain is on the cytoplasmic side. The chain crosses the membrane as a helical span at residues 107–127 (WVTAVITFAGACASAGIAVLV). Residues 128 to 148 (GRDIHRGCDVNFCGRYAAAAG) lie on the Extracellular side of the membrane. The chain crosses the membrane as a helical span at residues 149-169 (MAFLSWLLISTSFLFTFWLLA). At 170 to 171 (TR) the chain is on the cytoplasmic side.

The protein belongs to the Casparian strip membrane proteins (CASP) family. In terms of assembly, homodimer and heterodimers.

It is found in the cell membrane. This Pteridium aquilinum subsp. aquilinum (Bracken fern) protein is CASP-like protein 5A2.